The primary structure comprises 842 residues: MSNILRKVIENDKGELRKLEKIAKKVESYADYMESLSDKDLQAKTPEFKQRYQNGETLEQLLPEAFAVVREAARRVLGLYPYRVQIMGGVVLHNGDVPEMRTGEGKTLTATMPVYLNALAGEGVHVITVNEYLSTRDATEMGEVYSWLGLSVGINLAAKSPAEKREAYLCDITYSTNSEVGFDYLRDNMVVRQEDMVQRPLNFALVDEVDSVLIDEARTPLIVSGAVSSETNQLYIRADMFVKTLDSVDYIIDVPTKTIGLSDSGIDKAESYFNLSNLYDIENVALTHFVDNALRANYIMLLDIDYVVSEEGEILIVDQFTGRTMEGRRFSDGLHQAIEAKEGVRIQEESKTSASITYQNMFRMYKKLAGMTGTAKTEEEEFREVYNMRIIPIPTNRPIARIDHTDLLYATLNSKFKAVVADVKARYEKGQPVLVGTVAVETSDLISKKLVEAGIPHEVLNAKNHFKEAQIIMNAGQRGAVTIATNMAGRGTDIKLGEGVRELGGLCVIGTERHESRRIDNQLRGRSGRQGDPGESQFYLSLEDELMRRFGTDRIKAFLDRMNNDDEDIVIKSRMLSRQVESAQKRVEGNNYDTRKQVLQYDDVMREQREIIYANRRDVITANRDLGPEIKAMIKRTIDRAVDAHSRTNRKDAIDAIVTFARTSIVPEETIGAKELRGLKDDQIKDKLYQRALEIYDKQLSKLRDQDAILEFQKVLILMIVDNKWTEHIDALDQLRNAVGLRGYAQNNPVVEYQSEGFKMFQDMIGAIEFDVTRTMMKAQIHEQERERAIQYATTTAAQNIQSQAIGADFDSSADFSRVERNDACPCHSGKKFKNCHGRKAF.

ATP contacts are provided by residues Gln-85, 103–107, and Asp-493; that span reads GEGKT. Zn(2+) contacts are provided by Cys-825, Cys-827, Cys-836, and His-837.

This sequence belongs to the SecA family. Monomer and homodimer. Part of the essential Sec protein translocation apparatus which comprises SecA, SecYEG and auxiliary proteins SecDF. Other proteins may also be involved. Zn(2+) is required as a cofactor.

The protein localises to the cell membrane. The protein resides in the cytoplasm. It catalyses the reaction ATP + H2O + cellular proteinSide 1 = ADP + phosphate + cellular proteinSide 2.. Functionally, part of the Sec protein translocase complex. Interacts with the SecYEG preprotein conducting channel. Has a central role in coupling the hydrolysis of ATP to the transfer of proteins into and across the cell membrane, serving as an ATP-driven molecular motor driving the stepwise translocation of polypeptide chains across the membrane. The protein is Protein translocase subunit SecA of Streptococcus equi subsp. equi (strain 4047).